The primary structure comprises 327 residues: Undecaprenyl-phosphate 4-deoxy-4-formamido-L-arabinose transferase (327 aa).

The next 2 helical transmembrane spans lie at 235-255 and 270-290; these read LLSLVGSAIALLGFTFSVLLV and VFTLFAVLFMFIGAQFVGMGL.

The protein belongs to the glycosyltransferase 2 family.

The protein localises to the cell inner membrane. It carries out the reaction UDP-4-deoxy-4-formamido-beta-L-arabinose + di-trans,octa-cis-undecaprenyl phosphate = 4-deoxy-4-formamido-alpha-L-arabinopyranosyl di-trans,octa-cis-undecaprenyl phosphate + UDP. It participates in glycolipid biosynthesis; 4-amino-4-deoxy-alpha-L-arabinose undecaprenyl phosphate biosynthesis; 4-amino-4-deoxy-alpha-L-arabinose undecaprenyl phosphate from UDP-4-deoxy-4-formamido-beta-L-arabinose and undecaprenyl phosphate: step 1/2. It functions in the pathway bacterial outer membrane biogenesis; lipopolysaccharide biosynthesis. In terms of biological role, catalyzes the transfer of 4-deoxy-4-formamido-L-arabinose from UDP to undecaprenyl phosphate. The modified arabinose is attached to lipid A and is required for resistance to polymyxin and cationic antimicrobial peptides. This chain is Undecaprenyl-phosphate 4-deoxy-4-formamido-L-arabinose transferase, found in Yersinia pestis bv. Antiqua (strain Antiqua).